The chain runs to 244 residues: Nonsense-mediated decay protein 4 (244 aa).

Its subcellular location is the cytoplasm. Involved in nonsense-mediated decay of mRNAs containing premature stop codons. The chain is Nonsense-mediated decay protein 4 (NMD4) from Candida glabrata (strain ATCC 2001 / BCRC 20586 / JCM 3761 / NBRC 0622 / NRRL Y-65 / CBS 138) (Yeast).